The following is a 1029-amino-acid chain: Huntingtin-interacting protein 1 (1029 aa).

The ENTH domain maps to 32–160 (ERESFERTQT…EYHTKNPRFP (129 aa)). At serine 338 the chain carries Phosphoserine. Residues 375-636 (HLIERLYREI…IQEALSQLEE (262 aa)) adopt a coiled-coil conformation. Residues 410 to 491 (SELEAELAEQ…HADLLRKNAE (82 aa)) form a pDED region. The I/LWEQ domain maps to 763–1004 (GLDIKQEELG…ELRKKHYELA (242 aa)). Residues 859-916 (RWTEGLISASKAVGWGATIMVDAADLVVQGKGKFEELMVCSREIAASTAQLVAASKVK) are important for actin binding. A disordered region spans residues 1009-1029 (GWEEGTEASPSTVQEAIPDKE).

Belongs to the SLA2 family. Homodimer. Binds actin. Binds HTT (via N-terminus). This interaction is restricted to the brain. Binds to IFT57. In normal conditions, it poorly interacts with IFT57, HIP1 being strongly associated with HTT. However, in mutant HTT proteins with a long poly-Gln region, interaction between HTT and HIP1 is inhibited, promoting the interaction between HIP1 and IFT57. Interacts with CLTB (via N-terminus). Interacts (via coiled coil domain) with AR. Interacts with AP2A1, AP2A2, CLTC and HIP1R. Interacts with GRIA1, GRIN2A and GRIN2B. In terms of tissue distribution, most abundantly expressed in brain. In brain, expressed in cortical tissue, hippocampus, the molecular layer of the cerebellum and olfactory bulb. Also expressed in spinal cord and bone marrow (at protein level). Expressed in reproductive tissues.

It is found in the cytoplasm. The protein localises to the nucleus. Its subcellular location is the endomembrane system. The protein resides in the cytoplasmic vesicle. It localises to the clathrin-coated vesicle membrane. Plays a role in clathrin-mediated endocytosis and trafficking. Involved in regulating AMPA receptor trafficking in the central nervous system in an NMDA-dependent manner. Regulates presynaptic nerve terminal activity. Enhances androgen receptor (AR)-mediated transcription. May act as a proapoptotic protein that induces cell death by acting through the intrinsic apoptosis pathway. Binds 3-phosphoinositides (via ENTH domain). May act through the ENTH domain to promote cell survival by stabilizing receptor tyrosine kinases following ligand-induced endocytosis. May play a functional role in the cell filament networks. May be required for differentiation, proliferation, and/or survival of somatic and germline progenitors. The protein is Huntingtin-interacting protein 1 of Mus musculus (Mouse).